The sequence spans 865 residues: DNA topoisomerase 1 (865 aa).

Residues Lys3–Ile142 enclose the Toprim domain. Glu9 contacts Mg(2+). A disordered region spans residues Leu37 to Gly65. Low complexity predominate over residues Thr39 to Lys54. Position 111 (Asp111) interacts with Mg(2+). Residues Asn158–Leu575 enclose the Topo IA-type catalytic domain. An interaction with DNA region spans residues Ser192–Gln197. Tyr319 (O-(5'-phospho-DNA)-tyrosine intermediate) is an active-site residue. 3 C4-type zinc fingers span residues Cys599 to Cys630, Cys662 to Cys689, and Cys711 to Cys736.

Belongs to the type IA topoisomerase family. As to quaternary structure, monomer. Requires Mg(2+) as cofactor.

It carries out the reaction ATP-independent breakage of single-stranded DNA, followed by passage and rejoining.. In terms of biological role, releases the supercoiling and torsional tension of DNA, which is introduced during the DNA replication and transcription, by transiently cleaving and rejoining one strand of the DNA duplex. Introduces a single-strand break via transesterification at a target site in duplex DNA. The scissile phosphodiester is attacked by the catalytic tyrosine of the enzyme, resulting in the formation of a DNA-(5'-phosphotyrosyl)-enzyme intermediate and the expulsion of a 3'-OH DNA strand. The free DNA strand then undergoes passage around the unbroken strand, thus removing DNA supercoils. Finally, in the religation step, the DNA 3'-OH attacks the covalent intermediate to expel the active-site tyrosine and restore the DNA phosphodiester backbone. In Salmonella typhimurium (strain LT2 / SGSC1412 / ATCC 700720), this protein is DNA topoisomerase 1.